The primary structure comprises 245 residues: MGEVGESEKYLLNRHKEHHFTAGETVRDIIIGFSDGLTVPFALAAGLSGANASSSIILTAGIAEVAAGAISMGLGGYLAAKSEADHYTRELRREQEEIDTIPDTEAAEVAEILAEYGVEPHEYWPVVNSLRKNPKAWLDFMMKFELGLEKPNPRRALQSALTIAISYVLSGLIPLLPYMFIPIAQKAVVSSVIVTIFALLIFGFAKGYFTGNKPVWSALQTALIGAIASAAAFGMAKGCASSVFE.

Over 1 to 28 the chain is Cytoplasmic; sequence MGEVGESEKYLLNRHKEHHFTAGETVRD. The chain crosses the membrane as a helical span at residues 29 to 49; it reads IIIGFSDGLTVPFALAAGLSG. Residues 50 to 55 lie on the Vacuolar side of the membrane; it reads ANASSS. A helical transmembrane segment spans residues 56–76; the sequence is IILTAGIAEVAAGAISMGLGG. The Cytoplasmic segment spans residues 77 to 162; the sequence is YLAAKSEADH…PRRALQSALT (86 aa). Positions 94, 97, 105, 108, 141, and 145 each coordinate Fe cation. Residues 163-183 traverse the membrane as a helical segment; sequence IAISYVLSGLIPLLPYMFIPI. Topologically, residues 184–186 are vacuolar; that stretch reads AQK. A helical membrane pass occupies residues 187–207; the sequence is AVVSSVIVTIFALLIFGFAKG. Over 208 to 214 the chain is Cytoplasmic; it reads YFTGNKP. A helical membrane pass occupies residues 215–235; the sequence is VWSALQTALIGAIASAAAFGM. Over 236 to 245 the chain is Vacuolar; the sequence is AKGCASSVFE.

Belongs to the CCC1 family. In terms of tissue distribution, expressed in petal tissues, but not in other parts of the plant, such as leaves, roots, sepals and stems.

Its subcellular location is the vacuole membrane. The enzyme catalyses Fe(2+)(in) = Fe(2+)(out). Functionally, vacuolar iron transporter involved in the transfer of iron ions from the cytosol to the vacuole for intracellular iron storage. Plays an essential role in the development of blue coloration in cornflower petals. The polypeptide is Vacuolar iron transporter (Centaurea cyanus (Garden cornflower)).